The chain runs to 477 residues: uncharacterized protein (477 aa).

A signal peptide spans 1–18; the sequence is MWTALVLVWISSVPLSRS. The Extracellular portion of the chain corresponds to 19–427; that stretch reads HTVPAVPRHL…DPLTPSLVNK (409 aa). Residues N40, N51, and N77 are each glycosylated (N-linked (GlcNAc...) asparagine). 3 disordered regions span residues 79 to 103, 239 to 366, and 378 to 398; these read TRVTAETTPHGTNTSTPTTREGTAD, GTIN…TGGP, and KATAGTASAGPTSRSSGDVKV. Over residues 85 to 97 the composition is skewed to low complexity; it reads TTPHGTNTSTPTT. Polar residues-rich tracts occupy residues 253–288 and 298–309; these read PAKSTPTNTSSRNPIPTSGAQTQGTTIQVTTDQPVH and PSNTTLEPNTPK. N300 carries an N-linked (GlcNAc...) asparagine glycan. Composition is skewed to low complexity over residues 310–326, 348–361, and 378–393; these read SVASTSSAVVTTTQVQT, TSPTTQPSPLLPTQ, and KATAGTASAGPTSRSS. The chain crosses the membrane as a helical span at residues 428–448; that stretch reads MFLLVVLIVGVTLFIAVLMMF. The Cytoplasmic portion of the chain corresponds to 449–477; sequence ALQAYESYKKKDYTQVDYLINGMYADSEM.

The protein localises to the cell membrane. It localises to the golgi apparatus. The protein resides in the trans-Golgi network membrane. This is an uncharacterized protein from Rattus norvegicus (Rat).